A 345-amino-acid chain; its full sequence is Phosphoribosylformylglycinamidine cyclo-ligase (345 aa).

Belongs to the AIR synthase family.

It is found in the cytoplasm. The enzyme catalyses 2-formamido-N(1)-(5-O-phospho-beta-D-ribosyl)acetamidine + ATP = 5-amino-1-(5-phospho-beta-D-ribosyl)imidazole + ADP + phosphate + H(+). The protein operates within purine metabolism; IMP biosynthesis via de novo pathway; 5-amino-1-(5-phospho-D-ribosyl)imidazole from N(2)-formyl-N(1)-(5-phospho-D-ribosyl)glycinamide: step 2/2. This Escherichia coli O45:K1 (strain S88 / ExPEC) protein is Phosphoribosylformylglycinamidine cyclo-ligase.